Reading from the N-terminus, the 419-residue chain is Large ribosomal subunit protein uL4 (419 aa).

Position 2 is an N-acetylalanine (Ala2). Lys14 is subject to N6-acetyllysine. Residue Arg97 is modified to Omega-N-methylarginine. Residue Lys106 is modified to N6-acetyllysine. A Glycyl lysine isopeptide (Lys-Gly) (interchain with G-Cter in SUMO2) cross-link involves residue Lys239. Lys259 carries the N6-acetyllysine modification. A Phosphothreonine modification is found at Thr266. 2 positions are modified to phosphoserine: Ser290 and Ser295. Arg300 is modified (citrulline). Lys327 is covalently cross-linked (Glycyl lysine isopeptide (Lys-Gly) (interchain with G-Cter in SUMO2)). Residues Lys333 and Lys353 each carry the N6-acetyllysine modification. Lys364 carries the N6-acetyllysine; alternate modification. Lys364 participates in a covalent cross-link: Glycyl lysine isopeptide (Lys-Gly) (interchain with G-Cter in SUMO1); alternate. Residues 364–379 (KSEKVVPEKGTADKKP) show a composition bias toward basic and acidic residues. The segment at 364-419 (KSEKVVPEKGTADKKPAVGKKGKKVDAKKQKPAGKKVVAKKPAEKKPTTEEKKPAA) is disordered. Ser365 bears the Phosphoserine mark. Basic residues predominate over residues 393-402 (QKPAGKKVVA). A compositionally biased stretch (basic and acidic residues) spans 404–419 (KPAEKKPTTEEKKPAA).

The protein belongs to the universal ribosomal protein uL4 family. As to quaternary structure, component of the large ribosomal subunit. May bind IPO9 with low affinity. Interacts with RBM3. In terms of processing, citrullinated by PADI4.

It localises to the cytoplasm. Its function is as follows. Component of the large ribosomal subunit. The ribosome is a large ribonucleoprotein complex responsible for the synthesis of proteins in the cell. The chain is Large ribosomal subunit protein uL4 (Rpl4) from Mus musculus (Mouse).